A 57-amino-acid polypeptide reads, in one-letter code: uncharacterized protein (57 aa).

Residues 3-23 (PLTLLIIIGGVILGNELIISL) traverse the membrane as a helical segment. The tract at residues 38–57 (KHKHKTQENYETFASDKKRT) is disordered.

It is found in the host membrane. This is an uncharacterized protein from Acidianus bottle-shaped virus (isolate Italy/Pozzuoli) (ABV).